Reading from the N-terminus, the 466-residue chain is Transcription factor SOX-10 (466 aa).

Disordered regions lie at residues 1–67 (MAEE…DDDK), 160–200 (LRMQ…QGGA), 213–275 (DHRH…DFGN), 344–375 (TVSPPGVDAKAQVKTETTGPQGPPHYTDQPST), and 433–466 (RPLYTAISDPSPSGPQSHSPTHWEQPVYTTLSRP). Residues 23–32 (LSPGSAPSLG) show a composition bias toward low complexity. Residue S24 is modified to Phosphoserine. The tract at residues 62–102 (EADDDKFPVCIREAVSQVLSGYDWTLVPMPVRVNGASKSKP) is dimerization (DIM). Residues 104–172 (VKRPMNAFMV…QHKKDHPDYK (69 aa)) constitute a DNA-binding region (HMG box). Basic and acidic residues predominate over residues 160-173 (LRMQHKKDHPDYKY). The segment covering 183 to 200 (AAQGEAECPGGEAEQGGA) has biased composition (low complexity). The tract at residues 228 to 310 (PEHPSGQSHG…LPPNGHPGHV (83 aa)) is transactivation domain (TAM). Over residues 254–271 (ADPKRDGRSLGEGGKPHI) the composition is skewed to basic and acidic residues. The tract at residues 353–466 (KAQVKTETTG…QPVYTTLSRP (114 aa)) is transactivation domain (TAC). Residues 440-466 (SDPSPSGPQSHSPTHWEQPVYTTLSRP) are compositionally biased toward polar residues.

In terms of assembly, monomer. Interacts with Armcx3 at the mitochondrial outer membrane surface. Interacts with PAX3. Expressed in oligodendroglia of the spinal tube (at protein level).

It is found in the cytoplasm. It localises to the nucleus. Its subcellular location is the mitochondrion outer membrane. Its function is as follows. Transcription factor that plays a central role in developing and mature glia. Specifically activates expression of myelin genes, during oligodendrocyte (OL) maturation, such as DUSP15 and MYRF, thereby playing a central role in oligodendrocyte maturation and CNS myelination. Once induced, MYRF cooperates with SOX10 to implement the myelination program. Transcriptional activator of MITF, acting synergistically with PAX3. Transcriptional activator of MBP, via binding to the gene promoter. The protein is Transcription factor SOX-10 (Sox10) of Mus musculus (Mouse).